We begin with the raw amino-acid sequence, 201 residues long: Transcriptional regulator GfcR (201 aa).

This sequence belongs to the purine/pyrimidine phosphoribosyltransferase family. GfcR subfamily.

This chain is Transcriptional regulator GfcR, found in Methanobrevibacter smithii (strain ATCC 35061 / DSM 861 / OCM 144 / PS).